The primary structure comprises 439 residues: Protein disulfide-isomerase A6 (439 aa).

Residues 1-19 (MARLGFGLVSCTFFLAASG) form the signal peptide. Thioredoxin domains lie at 20-133 (LYSS…ALRQ) and 151-287 (QGRG…EDVA). Catalysis depends on nucleophile residues Cys55 and Cys58. The cysteines at positions 55 and 58 are disulfide-linked. Ser129, Ser156, and Ser158 each carry phosphoserine. The interval 141–160 (GRSGGYSSGKQGRGDSSSKK) is disordered. Catalysis depends on nucleophile residues Cys190 and Cys193. The cysteines at positions 190 and 193 are disulfide-linked. The disordered stretch occupies residues 400-425 (GSFPAITAREPWDGRDGELPVEDDID). At Ser427 the chain carries Phosphoserine. Residues 436 to 439 (KDEL) carry the Prevents secretion from ER motif.

Belongs to the protein disulfide isomerase family. In terms of assembly, part of a large chaperone multiprotein complex comprising DNAJB11, HSP90B1, HSPA5, HYOU, PDIA2, PDIA4, PDIA6, PPIB, SDF2L1, UGGT1 and very small amounts of ERP29, but not, or at very low levels, CALR nor CANX. Interacts with MICA on the surface of tumor cells, leading to MICA disulfide bond reduction which is required for its release from tumor cells. Interacts with ITGB3 following platelet stimulation. Interacts with ERN1; the interaction is direct. Interacts with EIF2AK3. Expressed most abundantly in lung and kidney, followed by heart, liver and brain.

It localises to the endoplasmic reticulum lumen. The protein resides in the cell membrane. It is found in the melanosome. It carries out the reaction Catalyzes the rearrangement of -S-S- bonds in proteins.. May function as a chaperone that inhibits aggregation of misfolded proteins. Negatively regulates the unfolded protein response (UPR) through binding to UPR sensors such as ERN1, which in turn inactivates ERN1 signaling. May also regulate the UPR via the EIF2AK3 UPR sensor. Plays a role in platelet aggregation and activation by agonists such as convulxin, collagen and thrombin. The chain is Protein disulfide-isomerase A6 (PDIA6) from Mesocricetus auratus (Golden hamster).